The sequence spans 182 residues: Probable tyrosine phosphatase protein H4 (182 aa).

One can recognise a Tyrosine-protein phosphatase domain in the interval Met1 to Ile182. Cys142 serves as the catalytic Phosphocysteine intermediate.

The protein belongs to the protein-tyrosine phosphatase family.

It catalyses the reaction O-phospho-L-tyrosyl-[protein] + H2O = L-tyrosyl-[protein] + phosphate. The polypeptide is Probable tyrosine phosphatase protein H4 (H5) (Microplitis demolitor (Parasitoid wasp)).